The sequence spans 244 residues: tRNA pseudouridine synthase A (244 aa).

The active-site Nucleophile is Asp-52. Tyr-110 lines the substrate pocket.

Belongs to the tRNA pseudouridine synthase TruA family. In terms of assembly, homodimer.

It carries out the reaction uridine(38/39/40) in tRNA = pseudouridine(38/39/40) in tRNA. Its function is as follows. Formation of pseudouridine at positions 38, 39 and 40 in the anticodon stem and loop of transfer RNAs. This chain is tRNA pseudouridine synthase A, found in Thermoanaerobacter pseudethanolicus (strain ATCC 33223 / 39E) (Clostridium thermohydrosulfuricum).